The following is a 179-amino-acid chain: Large ribosomal subunit protein uL6 (179 aa).

Belongs to the universal ribosomal protein uL6 family. In terms of assembly, part of the 50S ribosomal subunit.

Functionally, this protein binds to the 23S rRNA, and is important in its secondary structure. It is located near the subunit interface in the base of the L7/L12 stalk, and near the tRNA binding site of the peptidyltransferase center. The chain is Large ribosomal subunit protein uL6 from Prochlorococcus marinus (strain NATL2A).